The primary structure comprises 349 residues: DNA polymerase IV (349 aa).

A UmuC domain is found at 7–188; that stretch reads IIHIDMDYFF…LPVKKLFGVG (182 aa). Mg(2+) contacts are provided by Asp-11 and Asp-106. Residue Glu-107 is part of the active site.

The protein belongs to the DNA polymerase type-Y family. As to quaternary structure, monomer. Mg(2+) serves as cofactor.

The protein resides in the cytoplasm. It catalyses the reaction DNA(n) + a 2'-deoxyribonucleoside 5'-triphosphate = DNA(n+1) + diphosphate. Poorly processive, error-prone DNA polymerase involved in untargeted mutagenesis. Copies undamaged DNA at stalled replication forks, which arise in vivo from mismatched or misaligned primer ends. These misaligned primers can be extended by PolIV. Exhibits no 3'-5' exonuclease (proofreading) activity. May be involved in translesional synthesis, in conjunction with the beta clamp from PolIII. This chain is DNA polymerase IV, found in Francisella tularensis subsp. novicida (strain U112).